The primary structure comprises 277 residues: Probable endonuclease 4 (277 aa).

His-67, His-107, Glu-142, Asp-176, His-179, His-211, Asp-224, His-226, and Glu-256 together coordinate Zn(2+).

Belongs to the AP endonuclease 2 family. The cofactor is Zn(2+).

The enzyme catalyses Endonucleolytic cleavage to 5'-phosphooligonucleotide end-products.. Functionally, endonuclease IV plays a role in DNA repair. It cleaves phosphodiester bonds at apurinic or apyrimidinic (AP) sites, generating a 3'-hydroxyl group and a 5'-terminal sugar phosphate. The chain is Probable endonuclease 4 from Clostridium beijerinckii (strain ATCC 51743 / NCIMB 8052) (Clostridium acetobutylicum).